A 236-amino-acid polypeptide reads, in one-letter code: Small ribosomal subunit protein uS2c (236 aa).

The protein belongs to the universal ribosomal protein uS2 family.

Its subcellular location is the plastid. The protein localises to the chloroplast. This chain is Small ribosomal subunit protein uS2c (rps2), found in Panax ginseng (Korean ginseng).